The chain runs to 56 residues: Light-harvesting protein B-880 beta chain (56 aa).

The Cytoplasmic segment spans residues 1-22; it reads AEIDRPVSLSGLTEGEAREFHG. Positions 21 and 39 each coordinate a bacteriochlorophyll. A helical transmembrane segment spans residues 23 to 45; it reads VFMTSFMVFIAVAIVAHILAWMW. The Periplasmic portion of the chain corresponds to 46–56; the sequence is RPWIPGPEGYA.

The protein belongs to the antenna complex beta subunit family. In terms of assembly, the core complex is formed by different alpha and beta chains, binding bacteriochlorophyll molecules, and arranged most probably in tetrameric structures disposed around the reaction center. The non-pigmented gamma chains may constitute additional components.

The protein resides in the cell inner membrane. Functionally, antenna complexes are light-harvesting systems, which transfer the excitation energy to the reaction centers. This is Light-harvesting protein B-880 beta chain from Afifella marina (Rhodobium marinum).